Consider the following 512-residue polypeptide: ATP synthase subunit alpha (512 aa).

ATP is bound at residue 169-176; sequence GDRQTGKT.

Belongs to the ATPase alpha/beta chains family. F-type ATPases have 2 components, CF(1) - the catalytic core - and CF(0) - the membrane proton channel. CF(1) has five subunits: alpha(3), beta(3), gamma(1), delta(1), epsilon(1). CF(0) has three main subunits: a(1), b(2) and c(9-12). The alpha and beta chains form an alternating ring which encloses part of the gamma chain. CF(1) is attached to CF(0) by a central stalk formed by the gamma and epsilon chains, while a peripheral stalk is formed by the delta and b chains.

It localises to the cell inner membrane. It catalyses the reaction ATP + H2O + 4 H(+)(in) = ADP + phosphate + 5 H(+)(out). Its function is as follows. Produces ATP from ADP in the presence of a proton gradient across the membrane. The alpha chain is a regulatory subunit. The polypeptide is ATP synthase subunit alpha (Rickettsia bellii (strain OSU 85-389)).